A 277-amino-acid chain; its full sequence is Carbonyl reductase [NADPH] 1 (277 aa).

S2 carries the post-translational modification N-acetylserine. Phosphoserine is present on residues S2 and S30. NADP(+) contacts are provided by residues 10-34, 63-64, and N90; these read VTGG…GDVV and DI. Glutathione-binding positions include 95–97 and Q106; that span reads FKV. S140 provides a ligand contact to substrate. 193 to 194 provides a ligand contact to glutathione; that stretch reads AY. Y194 acts as the Proton acceptor in catalysis. Residues 194–198 and 231–233 each bind NADP(+); these read YGVTK and VRT. K239 carries the post-translational modification N6-1-carboxyethyl lysine.

The protein belongs to the short-chain dehydrogenases/reductases (SDR) family. As to quaternary structure, monomer. In terms of tissue distribution, expressed in kidney (at protein level).

The protein resides in the cytoplasm. It catalyses the reaction a secondary alcohol + NADP(+) = a ketone + NADPH + H(+). The enzyme catalyses a primary alcohol + NADP(+) = an aldehyde + NADPH + H(+). It carries out the reaction prostaglandin F2alpha + NADP(+) = prostaglandin E2 + NADPH + H(+). The catalysed reaction is prostaglandin E1 + NADP(+) = 15-oxoprostaglandin E1 + NADPH + H(+). It catalyses the reaction menadione + NADPH + H(+) = menadiol + NADP(+). The enzyme catalyses prostaglandin D2 + NADP(+) = 15-oxoprostaglandin D2 + NADPH + H(+). It carries out the reaction prostaglandin E2 + NADP(+) = 15-oxoprostaglandin E2 + NADPH + H(+). The catalysed reaction is prostaglandin F2alpha + NADP(+) = 15-oxoprostaglandin F2alpha + NADPH + H(+). It catalyses the reaction daunorubicin + NADPH + H(+) = 13-dihydrodaunorubicin + NADP(+). The enzyme catalyses S-nitrosoglutathione + NADPH + H(+) = S-(hydroxysulfenamide)glutathione + NADP(+). It carries out the reaction cortisol + NADPH + H(+) = 20beta-dihydrocortisol + NADP(+). The catalysed reaction is corticosterone + NADPH + H(+) = 20beta-dihydrocorticosterone + NADP(+). Inhibited by quercetin, rutenin and its derivatives. NADPH-dependent reductase with broad substrate specificity. Catalyzes the reduction of a wide variety of carbonyl compounds including quinones, prostaglandins, menadione, plus various xenobiotics. Catalyzes the reduction of the antitumor anthracyclines doxorubicin and daunorubicin to the cardiotoxic compounds doxorubicinol and daunorubicinol. Can convert prostaglandin E to prostaglandin F2-alpha. Can bind glutathione, which explains its higher affinity for glutathione-conjugated substrates. Catalyzes the reduction of S-nitrosoglutathione. In addition, participates in the glucocorticoid metabolism by catalyzing the NADPH-dependent cortisol/corticosterone into 20beta-dihydrocortisol (20b-DHF) or 20beta-corticosterone (20b-DHB), which are weak agonists of NR3C1 and NR3C2 in adipose tissue. The polypeptide is Carbonyl reductase [NADPH] 1 (Homo sapiens (Human)).